Reading from the N-terminus, the 429-residue chain is 3-phosphoshikimate 1-carboxyvinyltransferase (429 aa).

3-phosphoshikimate contacts are provided by Lys11, Ser12, and Arg16. Lys11 serves as a coordination point for phosphoenolpyruvate. Positions 82 and 110 each coordinate phosphoenolpyruvate. Ser155, Gln157, Asp302, and Lys329 together coordinate 3-phosphoshikimate. Gln157 provides a ligand contact to phosphoenolpyruvate. The Proton acceptor role is filled by Asp302. Phosphoenolpyruvate contacts are provided by Arg333 and Arg385.

It belongs to the EPSP synthase family. In terms of assembly, monomer.

The protein localises to the cytoplasm. It catalyses the reaction 3-phosphoshikimate + phosphoenolpyruvate = 5-O-(1-carboxyvinyl)-3-phosphoshikimate + phosphate. Its pathway is metabolic intermediate biosynthesis; chorismate biosynthesis; chorismate from D-erythrose 4-phosphate and phosphoenolpyruvate: step 6/7. Catalyzes the transfer of the enolpyruvyl moiety of phosphoenolpyruvate (PEP) to the 5-hydroxyl of shikimate-3-phosphate (S3P) to produce enolpyruvyl shikimate-3-phosphate and inorganic phosphate. This Helicobacter pylori (strain HPAG1) protein is 3-phosphoshikimate 1-carboxyvinyltransferase.